The primary structure comprises 232 residues: 5'-methylthioadenosine/S-adenosylhomocysteine nucleosidase (232 aa).

E12 acts as the Proton acceptor in catalysis. Substrate contacts are provided by residues G78, I152, and 173-174; that span reads ME. Residue D197 is the Proton donor of the active site.

This sequence belongs to the PNP/UDP phosphorylase family. MtnN subfamily. As to quaternary structure, homodimer.

It catalyses the reaction S-adenosyl-L-homocysteine + H2O = S-(5-deoxy-D-ribos-5-yl)-L-homocysteine + adenine. It carries out the reaction S-methyl-5'-thioadenosine + H2O = 5-(methylsulfanyl)-D-ribose + adenine. The enzyme catalyses 5'-deoxyadenosine + H2O = 5-deoxy-D-ribose + adenine. It participates in amino-acid biosynthesis; L-methionine biosynthesis via salvage pathway; S-methyl-5-thio-alpha-D-ribose 1-phosphate from S-methyl-5'-thioadenosine (hydrolase route): step 1/2. Functionally, catalyzes the irreversible cleavage of the glycosidic bond in both 5'-methylthioadenosine (MTA) and S-adenosylhomocysteine (SAH/AdoHcy) to adenine and the corresponding thioribose, 5'-methylthioribose and S-ribosylhomocysteine, respectively. Also cleaves 5'-deoxyadenosine, a toxic by-product of radical S-adenosylmethionine (SAM) enzymes, into 5-deoxyribose and adenine. Thus, is required for in vivo function of the radical SAM enzymes biotin synthase and lipoic acid synthase, that are inhibited by 5'-deoxyadenosine accumulation. In Cronobacter sakazakii (strain ATCC BAA-894) (Enterobacter sakazakii), this protein is 5'-methylthioadenosine/S-adenosylhomocysteine nucleosidase.